A 792-amino-acid polypeptide reads, in one-letter code: 5-methyltetrahydropteroyltriglutamate--homocysteine methyltransferase (792 aa).

5-methyltetrahydropteroyltri-L-glutamate is bound by residues 16–19 (RELK) and K112. L-homocysteine is bound by residues 432 to 434 (IGS) and E485. L-methionine is bound by residues 432-434 (IGS) and E485. 5-methyltetrahydropteroyltri-L-glutamate is bound by residues 516–517 (RC) and W562. D600 is a binding site for L-homocysteine. D600 lines the L-methionine pocket. Position 606 (E606) interacts with 5-methyltetrahydropteroyltri-L-glutamate. Positions 642, 644, and 666 each coordinate Zn(2+). H695 functions as the Proton donor in the catalytic mechanism. C727 lines the Zn(2+) pocket.

It belongs to the vitamin-B12 independent methionine synthase family. Zn(2+) is required as a cofactor.

The catalysed reaction is 5-methyltetrahydropteroyltri-L-glutamate + L-homocysteine = tetrahydropteroyltri-L-glutamate + L-methionine. It participates in amino-acid biosynthesis; L-methionine biosynthesis via de novo pathway; L-methionine from L-homocysteine (MetE route): step 1/1. In terms of biological role, catalyzes the transfer of a methyl group from 5-methyltetrahydrofolate to homocysteine resulting in methionine formation. The chain is 5-methyltetrahydropteroyltriglutamate--homocysteine methyltransferase from Cupriavidus necator (Alcaligenes eutrophus).